The following is a 143-amino-acid chain: Large ribosomal subunit protein uL15 (143 aa).

Positions 1–54 (MELNSIKPADGAKHAARRVGRGIGSGLGKTAGRGHKGQKSRSGGYHKVGFEGGQ) are disordered. A compositionally biased stretch (gly residues) spans 21–31 (RGIGSGLGKTA).

The protein belongs to the universal ribosomal protein uL15 family. In terms of assembly, part of the 50S ribosomal subunit.

Binds to the 23S rRNA. The polypeptide is Large ribosomal subunit protein uL15 (Acidovorax ebreus (strain TPSY) (Diaphorobacter sp. (strain TPSY))).